Consider the following 95-residue polypeptide: MLKSNNASETVTHKVGDKTAKKVFFRRRKGCPLSVHNAPVIDYKNPELLIKFVSEGGRMLPSRITNVCAKKQRKLNNAIKIARILALLPFVFQAK.

Belongs to the bacterial ribosomal protein bS18 family. As to quaternary structure, part of the 30S ribosomal subunit. Forms a tight heterodimer with protein bS6.

Binds as a heterodimer with protein bS6 to the central domain of the 16S rRNA, where it helps stabilize the platform of the 30S subunit. In Rickettsia akari (strain Hartford), this protein is Small ribosomal subunit protein bS18.